The chain runs to 268 residues: Hydroxyethylthiazole kinase (268 aa).

M45 contacts substrate. Residues R121 and T167 each coordinate ATP. G194 serves as a coordination point for substrate.

This sequence belongs to the Thz kinase family. Requires Mg(2+) as cofactor.

The catalysed reaction is 5-(2-hydroxyethyl)-4-methylthiazole + ATP = 4-methyl-5-(2-phosphooxyethyl)-thiazole + ADP + H(+). The protein operates within cofactor biosynthesis; thiamine diphosphate biosynthesis; 4-methyl-5-(2-phosphoethyl)-thiazole from 5-(2-hydroxyethyl)-4-methylthiazole: step 1/1. Its function is as follows. Catalyzes the phosphorylation of the hydroxyl group of 4-methyl-5-beta-hydroxyethylthiazole (THZ). The polypeptide is Hydroxyethylthiazole kinase (Bacillus cereus (strain ZK / E33L)).